Consider the following 144-residue polypeptide: Mannitol-specific phosphotransferase enzyme IIA component (144 aa).

One can recognise a PTS EIIA type-2 domain in the interval 3 to 142; the sequence is ELFSNDNIFL…EEIKQVFEEA (140 aa). Catalysis depends on His63, which acts as the Tele-phosphohistidine intermediate. His63 is modified (phosphohistidine; by HPr).

As to quaternary structure, homodimer or homotrimer. Seems to be a monomer when not phosphorylated.

It is found in the cytoplasm. The phosphoenolpyruvate-dependent sugar phosphotransferase system (sugar PTS), a major carbohydrate active transport system, catalyzes the phosphorylation of incoming sugar substrates concomitantly with their translocation across the cell membrane. The enzyme II CmtAB PTS system is involved in D-mannitol transport. The sequence is that of Mannitol-specific phosphotransferase enzyme IIA component (mtlF) from Staphylococcus aureus (strain COL).